Here is a 739-residue protein sequence, read N- to C-terminus: Exocyst complex component 3-like protein (739 aa).

Residues 1–370 (MDSAARDKTQ…DVSDLEPLLT (370 aa)) form a mediates interaction with EXOC2, EXOC4 and EXOC5 region.

Belongs to the SEC6 family. Interacts with EXOC2, EXOC4 and EXOC5; may be part of the exocyst.

Its subcellular location is the cytoplasmic vesicle. The protein localises to the secretory vesicle. In terms of biological role, as part of the exocyst, may play a role in regulated exocytosis of insulin granules. In Bos taurus (Bovine), this protein is Exocyst complex component 3-like protein (EXOC3L1).